A 336-amino-acid chain; its full sequence is Glycerol-3-phosphate dehydrogenase [NAD(P)+] (336 aa).

NADPH-binding residues include S11, W12, and K106. Sn-glycerol 3-phosphate contacts are provided by K106, G134, and S136. A138 contacts NADPH. The sn-glycerol 3-phosphate site is built by K189, D242, S252, R253, and N254. K189 serves as the catalytic Proton acceptor. Residue R253 coordinates NADPH. Positions 277 and 279 each coordinate NADPH.

This sequence belongs to the NAD-dependent glycerol-3-phosphate dehydrogenase family.

It is found in the cytoplasm. The enzyme catalyses sn-glycerol 3-phosphate + NAD(+) = dihydroxyacetone phosphate + NADH + H(+). It catalyses the reaction sn-glycerol 3-phosphate + NADP(+) = dihydroxyacetone phosphate + NADPH + H(+). It participates in membrane lipid metabolism; glycerophospholipid metabolism. Its function is as follows. Catalyzes the reduction of the glycolytic intermediate dihydroxyacetone phosphate (DHAP) to sn-glycerol 3-phosphate (G3P), the key precursor for phospholipid synthesis. In Agathobacter rectalis (strain ATCC 33656 / DSM 3377 / JCM 17463 / KCTC 5835 / VPI 0990) (Eubacterium rectale), this protein is Glycerol-3-phosphate dehydrogenase [NAD(P)+].